We begin with the raw amino-acid sequence, 2048 residues long: MLRVIVESATNIPKTKFGKPDPIVSVIFKDEKKKTKKVDNELNPVWNEILEFDLRGIPLDSSSSLVIVVKDFETIGQNKLIGTATVSLKDLIGDQNRSLPYKQTSLLNEKGQDTGATIDLVIGYTPPSAPHPNDPSGTSVPGMGEEEEEDQGDEDRVDGIVRGPGPKGPSGTVSEAQLARRITKGKSSRRMLSNKPQDFQIRVRVIEGRQLCGNNIRPVVKVHICGQTHRTRIKRGNNPFFDELFFYNVHITPSELMDEIISIRVYNSHSLRADCLMGEFKIDVGFVYDEPGHAVMRKWLLLNDPEDTSSGAKGYMKVSMFVLGTGDEPPPEKRDRDNDSDDVESNLLLPAGIALRWVTFMLKIYRAEDIPQMDDAFSQTVKEIFGGNADKKNLVDPFVEVSFAGKKVCTNIIERNANPEWNQVVNLQIKFPSMCEKIKLTVYDWDRLTKNDVVGTTYLYLSKIAASGGEVEATTGETEVGFVPTFGPCYLNLYGSPREYTGFPDPYDELNSGKGEGVAYRGRIFVELNTFLEKKPPEKKLEPISSDDLLVVEKYQRRRKYSLSAVFHSATMLQDVGEAIQFEVSIGNYGNKFDATCKPLASTTQYSRAVFDGNYYYYLPWAHTKPVVTLTSYWEDISHRLDAVNTLLVMAERLQSNIEAVKSGIQGKIPANQLAEVWLKLIDEVIEDTRYTLPVTEGKANVTVLDTQIRKLRSRFLSQIHEAALRMRSEATDVKSTLLEIEEWLDKLMQLTEEPQNSMPDIIIWMIRGEKRLAYARIPAHQVLYSTSGGNASGKYCGKTQTILLKYPQEKTNGPKVPVELRVNIWLGLSAVEKKFNSFAEGTFTVFAEMYENQALVFGKWGTSGLVGRHKFSDVTGKIKLKREFFLPPKGWEWEGDWVVDPERSLLTEADAGHTEFTDEVYQNENRYPGGEWKQAEDTYTDANGDKAASPSEMTCPPGWEWEDDAWIYDINRAVDEKGWEYGITIPPDNKPKSWVAAEKMYHTHRRRRLVRKRKKDLTQTASSTARAMEELEDREGWEYASLIGWKFHWKQRSSDTFRRRRWRRKMAPSETHGAAAIFKLEGALGADTTEDGEEKGPEKQKHSATTVFGANTPIVSCNFDRVYIYHLRCYIYQARNLMALDKDSFSDPYAHVSFLHRSKTTEIIHSTLNPTWDQTIIFDEVEIFGEPQTVLQNPPNVTIELFDNDQVGKDEFLGRSICSPLVKLNSETDITPKLLWHPVMNGDKACGDVLVTAELILRNKDGSNLPILPSQRAPNLYMVPQGIRPVVQLTAIEILAWGLRNMKNYQMASVTSPSLVVECGGERVESVVIKSLKKTPNFPSSVLFMKVFLPKEELYMPPLVIKVIDHRQFGRKPVVGQCTIDHLDRFRCDPYAGKEDIVPQLKASLMSAPPCREVVIEIEDTKPLLASKLSEKEEEIVDWWSKFYASSGEHEKCGQYIQKGYSKLKIYDCELEDVADFEGLTDFSDTFKLYRGKSDENEDPSVVGEFKGSFRIYPLPDDPSVPAPPRQFRELPDSVPQECTVRIYIVQGLQLQPQDNNGLCDPYIKITLGKKVIEDRDHYIPNTLNPVFGRMYELSCYLPQEKDLKISVYDYDTFTRDEKVGETTIDLENRFLSRFGSHCGIPEQYCVSGVNTWRDQLRPTQLLQNVARFKGFPPPVLSEDGSRIRYGGRDYHLDEFEANKILHQHLGAPEERLALHILRTQGLVPEHVETRTLHSTFQPNISQGKLQMWVDVFPKSLGPPGPPFNITPRKAKKYYLRVIIWNTKDVILDEKSITGEDMSDIYVKGWISGSEENKQKTDVHYRSLDGEGNFNWRFVFPFDYLPAEQLCIVAKKEHFWSIDQTEFRVPPRLIIQIWDNDKFSLDDYLGFLELDLHRTIIPAKTSEKCSLDMIPDLKAMDPLKAKTASLFEQRSMKGWWPCYADKDGTRVMAGKVEMTLEVLNEREADERPAGKGRSEPNMNPKLDPPNRPETSFLWFTNPCKTMRFIVWRRFKWVIIGLLLLLILLLFVAVLLYSLPNYLSMKIVRPNA.

Residues 1-101 (MLRVIVESAT…IGDQNRSLPY (101 aa)) form the C2 1 domain. Topologically, residues 1-2012 (MLRVIVESAT…MRFIVWRRFK (2012 aa)) are cytoplasmic. A disordered region spans residues 124–176 (YTPPSAPHPNDPSGTSVPGMGEEEEEDQGDEDRVDGIVRGPGPKGPSGTVSEA). Residues 144–156 (GEEEEEDQGDEDR) show a composition bias toward acidic residues. Residues Ser170 and Ser174 each carry the phosphoserine modification. 2 consecutive C2 domains span residues 183-300 (TKGK…RKWL) and 339-475 (DSDD…EATT). The interval 186-281 (KSSRRMLSNK…RADCLMGEFK (96 aa)) is necessary for interaction with EHD2. Residues Asp390, Asp396, Asp444, Asp446, and Asp452 each contribute to the Ca(2+) site. Lys540 and Lys871 each carry N6-acetyllysine. 2 consecutive C2 domains span residues 1110–1238 (GANT…LLWH) and 1269–1397 (LPSQ…GKED). Residues Asp1142, Asp1148, Asp1204, and Asp1206 each coordinate Ca(2+). Lys1494 carries the N6-acetyllysine modification. C2 domains follow at residues 1523–1641 (PAPP…SHCG) and 1759–1907 (GPPG…EKCS). Ca(2+) is bound by residues Asp1556, Asp1562, Asp1611, Asp1613, Asp1878, Ser1881, and Asp1884. Positions 1964–1975 (EADERPAGKGRS) are enriched in basic and acidic residues. The disordered stretch occupies residues 1964–1986 (EADERPAGKGRSEPNMNPKLDPP). The chain crosses the membrane as a helical span at residues 2013 to 2033 (WVIIGLLLLLILLLFVAVLLY). At 2034–2048 (SLPNYLSMKIVRPNA) the chain is on the extracellular side.

Belongs to the ferlin family. In terms of assembly, interacts with EHD1. Interacts with EHD2; the interaction is direct. Interacts with DNM2 and KDR. Interacts with RIPOR2. Ca(2+) is required as a cofactor. As to expression, expressed in myoblasts (at protein level). Expressed in endothelial cells.

The protein resides in the cell membrane. The protein localises to the nucleus membrane. Its subcellular location is the cytoplasmic vesicle membrane. Its function is as follows. Calcium/phospholipid-binding protein that plays a role in the plasmalemma repair mechanism of endothelial cells that permits rapid resealing of membranes disrupted by mechanical stress. Involved in endocytic recycling. Implicated in VEGF signal transduction by regulating the levels of the receptor KDR. This chain is Myoferlin (Myof), found in Mus musculus (Mouse).